A 331-amino-acid chain; its full sequence is N-arachidonyl glycine receptor (331 aa).

At 1 to 26 (MITLNNQDQPVPFNSSHPDEYKIAAL) the chain is on the extracellular side. The N-linked (GlcNAc...) asparagine glycan is linked to N14. A helical membrane pass occupies residues 27-47 (VFYSCIFIIGLFVNITALWVF). The Cytoplasmic portion of the chain corresponds to 48-56 (SCTTKKRTT). Residues 57–77 (VTIYMMNVALVDLIFIMTLPF) traverse the membrane as a helical segment. Residues 78-95 (RMFYYAKDEWPFGEYFCQ) are Extracellular-facing. A disulfide bridge connects residues C94 and C172. A helical membrane pass occupies residues 96–116 (ILGALTVFYPSIALWLLAFIS). Topologically, residues 117 to 138 (ADRYMAIVQPKYAKELKNTCKA) are cytoplasmic. Residues 139–159 (VLACVGVWIMTLTTTTPLLLL) form a helical membrane-spanning segment. Topologically, residues 160 to 191 (YKDPDKDSTPATCLKISDIIYLKAVNVLNLTR) are extracellular. Residues 192–212 (LTFFFLIPLFIMIGCYLVIIH) form a helical membrane-spanning segment. Over 213–232 (NLLHGRTSKLKPKVKEKSIR) the chain is Cytoplasmic. Residues 233–253 (IIITLLVQVLVCFMPFHICFA) form a helical membrane-spanning segment. The Extracellular portion of the chain corresponds to 254–268 (FLMLGTGENSYNPWG). Residues 269–289 (AFTTFLMNLSTCLDVILYYIV) form a helical membrane-spanning segment. Residues 290–331 (SKQFQARVISVMLYRNYLRSMRRKSFRSGSLRSLSNINSEML) lie on the Cytoplasmic side of the membrane. Phosphoserine is present on S322.

This sequence belongs to the G-protein coupled receptor 1 family. As to expression, expressed in midpiece of spermatozoon (at protein level). Most abundant in testis and spleen. Highly expressed in CD4 and CD8-positive T-cells as well as CD19-positive B-cells.

It is found in the cell membrane. It localises to the cytoplasmic vesicle membrane. G protein-coupled receptor (GPCR) that plays a role in diverse physiological processes particularly within the immune and nervous systems. Becomes active when triggered by various endogenous ligands including endocannabinoid N-arachidonyl glycine (NAGly), delta-9-tetrahydrocannabinol or resolvin D2/RvD2 derived from the omega-3 fatty acid docosahexaenoic acid (DHA). Upon RvD2 binding, facilitates the resolution of inflammation, aiding in tissue repair and homeostasis. Mechanistically, RvD2 ligation initiates Galphas protein coupling, activation of cAMP-PKA signaling pathway and phosphorylation of STAT3, leading to RvD2-stimulated macrophage phagocytosis. Mediates NAGly-induced process of reorganization of actin filaments and induction of acrosomal exocytosis. Activation by N-arachidonoyl glycine (NAGly) can also induce apoptosis in macrophages. Plays a role in homeostasis of CD8+ subsets of intraepithelial lymphocytes (IELs) (CD8alphaalpha and CD8alphabeta IELs) in small intestine by supporting preferential migration of CD8alphaalpha T-cells to intraepithelial compartment over lamina propria compartment, and by mediating their reconstitution into small intestine after bone marrow transplant. Also participates in hypotensive responses, mediating reduction in intraocular and blood pressure. This chain is N-arachidonyl glycine receptor (GPR18), found in Homo sapiens (Human).